The chain runs to 82 residues: Small ribosomal subunit protein bS18 (82 aa).

Positions 1 to 25 (MKRNNMKRARMEQSRRPKKNPLKAE) are disordered.

The protein belongs to the bacterial ribosomal protein bS18 family. As to quaternary structure, part of the 30S ribosomal subunit. Forms a tight heterodimer with protein bS6.

Its function is as follows. Binds as a heterodimer with protein bS6 to the central domain of the 16S rRNA, where it helps stabilize the platform of the 30S subunit. The sequence is that of Small ribosomal subunit protein bS18 from Corynebacterium urealyticum (strain ATCC 43042 / DSM 7109).